The sequence spans 1864 residues: Nestin (1864 aa).

Methionine 1 is modified (N-acetylmethionine). The tract at residues methionine 1–glutamate 7 is head. Residues glutamate 8–leucine 43 form a coil 1A region. The IF rod domain maps to glutamate 8 to leucine 314. The tract at residues arginine 44–arginine 55 is linker 1. Residues alanine 56–leucine 151 form a coil 1B region. The linker 12 stretch occupies residues asparagine 152–proline 174. Positions glutamate 175–aspartate 193 are coil 2A. Residues tyrosine 194–glutamate 196 form a linker 2 region. Residues arginine 197 to leucine 314 form a coil 2B region. Serine 312 is subject to Phosphoserine. Residues glutamine 315–aspartate 1864 form a tail region. Threonine 316 is subject to Phosphothreonine. Phosphoserine is present on residues serine 356 and serine 359. At threonine 389 the chain carries Phosphothreonine. Disordered stretches follow at residues glycine 437–glycine 492, glutamate 515–glutamate 625, and lysine 680–asparagine 845. Basic and acidic residues predominate over residues serine 469–glutamate 480. Residues lysine 559–valine 573 are compositionally biased toward polar residues. Serine 565 and serine 575 each carry phosphoserine. 2 stretches are compositionally biased toward basic and acidic residues: residues serine 575–leucine 598 and leucine 609–aspartate 618. 7 positions are modified to phosphoserine: serine 623, serine 688, serine 731, serine 775, serine 841, serine 862, and serine 894. Basic and acidic residues-rich tracts occupy residues lysine 680 to glutamate 690, proline 698 to proline 732, leucine 742 to proline 776, and leucine 786 to aspartate 843. Composition is skewed to basic and acidic residues over residues isoleucine 916–glycine 925, glutamine 947–glutamate 965, and leucine 978–glutamate 1012. The tract at residues isoleucine 916–glutamate 1113 is disordered. 3 positions are modified to phosphoserine: serine 963, serine 1010, and serine 1021. A compositionally biased stretch (basic and acidic residues) spans glutamate 1065–glutamine 1090. 2 positions are modified to phosphoserine: serine 1106 and serine 1127. Disordered regions lie at residues aspartate 1129 to valine 1158, leucine 1175 to glutamate 1344, glutamate 1375 to leucine 1722, and glutamate 1735 to glutamine 1807. A compositionally biased stretch (polar residues) spans proline 1133 to threonine 1143. Phosphoserine occurs at positions 1177, 1188, and 1195. The span at glycine 1204–serine 1213 shows a compositional bias: basic and acidic residues. Serine 1216 is subject to Phosphoserine. The segment covering threonine 1254 to glutamate 1273 has biased composition (basic and acidic residues). Serine 1290 bears the Phosphoserine mark. A compositionally biased stretch (basic and acidic residues) spans glutamate 1384–glycine 1405. The span at glutamate 1429–serine 1440 shows a compositional bias: acidic residues. Residues glycine 1514–isoleucine 1527 show a composition bias toward basic and acidic residues. The span at glutamine 1532 to glycine 1547 shows a compositional bias: acidic residues. Phosphoserine is present on residues serine 1541 and serine 1565. The segment covering leucine 1612–glycine 1621 has biased composition (acidic residues). Phosphoserine occurs at positions 1656 and 1665. Over residues glycine 1658–alanine 1680 the composition is skewed to acidic residues. The span at glutamine 1703–valine 1712 shows a compositional bias: basic and acidic residues. Low complexity-rich tracts occupy residues glycine 1713 to leucine 1722 and serine 1741 to leucine 1755. 2 positions are modified to phosphoserine: serine 1745 and serine 1747. The segment covering glutamine 1788–valine 1797 has biased composition (polar residues). Serine 1837, serine 1860, and serine 1861 each carry phosphoserine. Positions leucine 1841–aspartate 1864 are disordered.

The protein belongs to the intermediate filament family. In terms of assembly, forms homodimers and homotetramers in vitro. In mixtures with other intermediate filament proteins such as vimentin and alpha-internexin, this protein preferentially forms heterodimers which can assemble to form intermediate filaments if nestin does not exceed 25%. Interacts with FHOD3. Post-translationally, constitutively phosphorylated. This increases during mitosis when the cytoplasmic intermediate filament network is reorganized.

Functionally, required for brain and eye development. Promotes the disassembly of phosphorylated vimentin intermediate filaments (IF) during mitosis and may play a role in the trafficking and distribution of IF proteins and other cellular factors to daughter cells during progenitor cell division. Required for survival, renewal and mitogen-stimulated proliferation of neural progenitor cells. This chain is Nestin (Nes), found in Mus musculus (Mouse).